The sequence spans 61 residues: [Val1,Thr6]-bradykinyl-Gln,Ser (61 aa).

The signal sequence occupies residues 1 to 22 (MSILKKSLFLVLFLGLVSFSIC). The propeptide occupies 23–50 (EEEKREAEEEENEDEIEEQSEEKKRFEP). A disordered region spans residues 25-61 (EKREAEEEENEDEIEEQSEEKKRFEPVPPGFTPFRQS). A compositionally biased stretch (acidic residues) spans 30 to 42 (EEEENEDEIEEQS). A 4-hydroxyproline; in form [Val1,Hyp2,Thr6]-Bradykinyl-Gln,Ser and [Val1,Hyp2,Thr6]-Bradykinin modification is found at proline 52.

This sequence belongs to the frog skin active peptide (FSAP) family. Bradykinin-related peptide subfamily. Expressed by the skin glands.

The protein resides in the secreted. In terms of biological role, induces contraction of rat ileum smooth muscle (EC(50)=2.73 uM) but has no activity towards smooth muscle from tail artery, urinary bladder or uterus up to concentrations of 100 uM. Binds to both bradykinin receptor B1 (BDKRB1) and B2 (BDKRB2); the effect via BDKRB1 is stronger. Its function is as follows. [Val1,Hyp2,Thr6]-bradykinin-Gln,Ser: Induces contraction of rat ileum smooth muscle (EC(50)=710 nM) but has no activity towards smooth muscle from tail artery, urinary bladder or uterus up to concentrations of 100 uM. Binds to both bradykinin receptor B1 (BDKRB1) and B2 (BDKRB2); the effect via BDKRB1 is stronger. Induces contraction of guinea pig ileum smooth muscle. The chain is [Val1,Thr6]-bradykinyl-Gln,Ser from Pithecopus hypochondrialis (Orange-legged leaf frog).